The sequence spans 159 residues: Phosphopantetheine adenylyltransferase (159 aa).

Thr-10 is a binding site for substrate. ATP contacts are provided by residues 10 to 11 (TF) and His-18. Lys-42, Leu-74, and Arg-88 together coordinate substrate. ATP contacts are provided by residues 89–91 (GLR), Glu-99, and 124–130 (YAFISSS).

It belongs to the bacterial CoaD family. In terms of assembly, homohexamer. Mg(2+) is required as a cofactor.

It localises to the cytoplasm. It carries out the reaction (R)-4'-phosphopantetheine + ATP + H(+) = 3'-dephospho-CoA + diphosphate. Its pathway is cofactor biosynthesis; coenzyme A biosynthesis; CoA from (R)-pantothenate: step 4/5. Functionally, reversibly transfers an adenylyl group from ATP to 4'-phosphopantetheine, yielding dephospho-CoA (dPCoA) and pyrophosphate. This Hydrogenovibrio crunogenus (strain DSM 25203 / XCL-2) (Thiomicrospira crunogena) protein is Phosphopantetheine adenylyltransferase.